Reading from the N-terminus, the 563-residue chain is PHD finger protein EHD3 (563 aa).

The interval 1 to 46 (MGSQNRPPPPRKRQPPPPEDHLVTYKRRRSKETQPLPLMANGANSK) is disordered. PHD-type zinc fingers lie at residues 296 to 348 (LCPC…CSFK), 420 to 472 (SNLC…CWYC), and 474 to 524 (SCLC…CKIR).

Interacts with TRX1. Expressed in shoot apical meristem and leaves.

Its subcellular location is the nucleus. Probable transcription factor involved in the regulation of floral induction under long day (LD) conditions. Promotes photoperiodic flowering by repressing GHD7, a major floral repressor. Seems to function independently of HD1. The chain is PHD finger protein EHD3 from Oryza sativa subsp. japonica (Rice).